We begin with the raw amino-acid sequence, 473 residues long: Photosystem II CP43 reaction center protein (473 aa).

A propeptide spanning residues Met1–Glu14 is cleaved from the precursor. N-acetylthreonine is present on Thr15. Residue Thr15 is modified to Phosphothreonine. Helical transmembrane passes span Leu69–Ala93, Leu134–Asn155, Lys178–Thr200, Lys255–Ser275, and Trp291–Ala312. Residue Glu367 coordinates [CaMn4O5] cluster. A helical transmembrane segment spans residues Arg447–Pro471.

Belongs to the PsbB/PsbC family. PsbC subfamily. In terms of assembly, PSII is composed of 1 copy each of membrane proteins PsbA, PsbB, PsbC, PsbD, PsbE, PsbF, PsbH, PsbI, PsbJ, PsbK, PsbL, PsbM, PsbT, PsbX, PsbY, PsbZ, Psb30/Ycf12, at least 3 peripheral proteins of the oxygen-evolving complex and a large number of cofactors. It forms dimeric complexes. Binds multiple chlorophylls and provides some of the ligands for the Ca-4Mn-5O cluster of the oxygen-evolving complex. It may also provide a ligand for a Cl- that is required for oxygen evolution. PSII binds additional chlorophylls, carotenoids and specific lipids. is required as a cofactor.

It is found in the plastid. Its subcellular location is the chloroplast thylakoid membrane. One of the components of the core complex of photosystem II (PSII). It binds chlorophyll and helps catalyze the primary light-induced photochemical processes of PSII. PSII is a light-driven water:plastoquinone oxidoreductase, using light energy to abstract electrons from H(2)O, generating O(2) and a proton gradient subsequently used for ATP formation. The sequence is that of Photosystem II CP43 reaction center protein from Oenothera argillicola (Appalachian evening primrose).